The following is a 504-amino-acid chain: Putative glycerol-3-phosphate transporter 2 (504 aa).

12 helical membrane-spanning segments follow: residues 31–51 (LSFKQYQALVFILTFVAYIAF), 84–104 (ALLGQIDLAFLSVYAVGMFVA), 116–136 (FLTIGMIGTGLFTALFGVAFW), 145–165 (FLAVQVMAGLFQSIGWPCIVA), 178–198 (MIMGVWSAHTSLGNIAGSLIA), 210–230 (FLGPAFLMTFLGIVVYLFLPV), 280–302 (IPGVAPFAFCLFFTKLVSYTFLY), 324–344 (GNLSTIFDVGGVVGGVLAGYI), 352–372 (AITAAGFMYLAIPALFLYRVF), 378–398 (TINVILMFTSGVFIIGPFALI), 424–444 (AIIDGTGSVGAAIGPVLTGYI), and 452–472 (VFYMLMTAALISGLLLTKLII).

The protein belongs to the major facilitator superfamily. Organophosphate:Pi antiporter (OPA) (TC 2.A.1.4) family. In terms of tissue distribution, expressed in the root-hair differentiation zone.

It localises to the membrane. The chain is Putative glycerol-3-phosphate transporter 2 from Arabidopsis thaliana (Mouse-ear cress).